The chain runs to 206 residues: Large ribosomal subunit protein uL4 (206 aa).

Residues 44-87 (NRQGTQSAKTRSEVSGGGRKPWRQKGTGHARQGSTRSPQWTGGG) form a disordered region.

This sequence belongs to the universal ribosomal protein uL4 family. As to quaternary structure, part of the 50S ribosomal subunit.

Functionally, one of the primary rRNA binding proteins, this protein initially binds near the 5'-end of the 23S rRNA. It is important during the early stages of 50S assembly. It makes multiple contacts with different domains of the 23S rRNA in the assembled 50S subunit and ribosome. Its function is as follows. Forms part of the polypeptide exit tunnel. This is Large ribosomal subunit protein uL4 from Lachnospira eligens (strain ATCC 27750 / DSM 3376 / VPI C15-48 / C15-B4) (Eubacterium eligens).